A 460-amino-acid polypeptide reads, in one-letter code: V-type ATP synthase beta chain (460 aa).

It belongs to the ATPase alpha/beta chains family.

In terms of biological role, produces ATP from ADP in the presence of a proton gradient across the membrane. The V-type beta chain is a regulatory subunit. The protein is V-type ATP synthase beta chain of Thermotoga neapolitana (strain ATCC 49049 / DSM 4359 / NBRC 107923 / NS-E).